We begin with the raw amino-acid sequence, 234 residues long: ATP synthase subunit a 1 (234 aa).

5 helical membrane-spanning segments follow: residues 20 to 40, 76 to 96, 105 to 125, 162 to 184, and 195 to 215; these read ETVVTTWLIMLVLVVASILLT, LLPLIGTFWIFLPVANLLGVI, DLSVTAALALVVFFAVHAYGV, LFGNIMSLEMAALLILLVAGFLA, and EALVQAYIFGMLALIYVAGAM.

This sequence belongs to the ATPase A chain family. F-type ATPases have 2 components, CF(1) - the catalytic core - and CF(0) - the membrane proton channel. CF(1) has five subunits: alpha(3), beta(3), gamma(1), delta(1), epsilon(1). CF(0) has three main subunits: a(1), b(2) and c(9-12). The alpha and beta chains form an alternating ring which encloses part of the gamma chain. CF(1) is attached to CF(0) by a central stalk formed by the gamma and epsilon chains, while a peripheral stalk is formed by the delta and b chains.

The protein resides in the cell inner membrane. Key component of the proton channel; it plays a direct role in the translocation of protons across the membrane. This chain is ATP synthase subunit a 1, found in Hahella chejuensis (strain KCTC 2396).